The sequence spans 248 residues: Thioredoxin-like protein AAED1, chloroplastic (248 aa).

Residues 1–52 constitute a chloroplast transit peptide; sequence MAIALSSSSTITSITLQPKLKTIHGLGTVLPGYSVKSHFRSVSLRRSAVVVS. Position 53 is an N-acetylalanine (Ala53).

Belongs to the peroxiredoxin-like PRXL2 family. PRXL2C subfamily.

It is found in the plastid. It localises to the chloroplast. In Arabidopsis thaliana (Mouse-ear cress), this protein is Thioredoxin-like protein AAED1, chloroplastic.